The chain runs to 363 residues: Histidinol-phosphate aminotransferase (363 aa).

Lys-226 carries the N6-(pyridoxal phosphate)lysine modification.

It belongs to the class-II pyridoxal-phosphate-dependent aminotransferase family. Histidinol-phosphate aminotransferase subfamily. As to quaternary structure, homodimer. Pyridoxal 5'-phosphate serves as cofactor.

The enzyme catalyses L-histidinol phosphate + 2-oxoglutarate = 3-(imidazol-4-yl)-2-oxopropyl phosphate + L-glutamate. The protein operates within amino-acid biosynthesis; L-histidine biosynthesis; L-histidine from 5-phospho-alpha-D-ribose 1-diphosphate: step 7/9. This is Histidinol-phosphate aminotransferase from Campylobacter lari (strain RM2100 / D67 / ATCC BAA-1060).